The primary structure comprises 299 residues: ATP phosphoribosyltransferase (299 aa).

The protein belongs to the ATP phosphoribosyltransferase family. Long subfamily. As to quaternary structure, equilibrium between an active dimeric form, an inactive hexameric form and higher aggregates. Interconversion between the various forms is largely reversible and is influenced by the natural substrates and inhibitors of the enzyme. It depends on Mg(2+) as a cofactor.

It is found in the cytoplasm. The catalysed reaction is 1-(5-phospho-beta-D-ribosyl)-ATP + diphosphate = 5-phospho-alpha-D-ribose 1-diphosphate + ATP. It participates in amino-acid biosynthesis; L-histidine biosynthesis; L-histidine from 5-phospho-alpha-D-ribose 1-diphosphate: step 1/9. Feedback inhibited by histidine. Its function is as follows. Catalyzes the condensation of ATP and 5-phosphoribose 1-diphosphate to form N'-(5'-phosphoribosyl)-ATP (PR-ATP). Has a crucial role in the pathway because the rate of histidine biosynthesis seems to be controlled primarily by regulation of HisG enzymatic activity. The protein is ATP phosphoribosyltransferase of Salmonella choleraesuis (strain SC-B67).